The chain runs to 689 residues: Glycine--tRNA ligase beta subunit (689 aa).

It belongs to the class-II aminoacyl-tRNA synthetase family. As to quaternary structure, tetramer of two alpha and two beta subunits.

Its subcellular location is the cytoplasm. The catalysed reaction is tRNA(Gly) + glycine + ATP = glycyl-tRNA(Gly) + AMP + diphosphate. The sequence is that of Glycine--tRNA ligase beta subunit from Escherichia coli (strain K12 / MC4100 / BW2952).